The sequence spans 1115 residues: Iron-regulated protein FrpA (1115 aa).

7 Hemolysin-type calcium-binding repeats span residues 755–772 (FGHNKNVSLYGNDGNDTL), 773–790 (IGGAGNDYLEGGSGSDTY), 901–918 (NGGLGDDYLYGADGNDLL), 919–936 (NGDAGNDSIYSGNGNDTL), 937–954 (DGGEGNDALYGYNGNDAL), 955–972 (NGGEGNDHLNGEDGNDTL), and 973–990 (IGGAGNDYLEGGSGSDTY).

It belongs to the RTX prokaryotic toxin (TC 1.C.11) family.

It localises to the cell outer membrane. It is found in the secreted. Its function is as follows. May participate in the pathogenesis of meningococcal disease. The chain is Iron-regulated protein FrpA (frpA) from Neisseria meningitidis serogroup C.